The primary structure comprises 633 residues: MHGLLLAGLLALPMNVLAYPAEQHASNVLSRRGVDIESFRLPLKAKYMDSEATAQKIQAMSFSKDDDYVSTATKLVKSTFPKSTFRVVDDHYIGTNGIGHVHFKQTAHGLDIDNSDFNVNIGRDGKVFSFGNSFFTGEIPKENPMVKRAFSDPVKALKGAVKALNLPVKSDNAKPKTIAGKESFEFMGTTGALSAPKANLVYLQKEDGTLALTWKVETDVGDNWLLTYVDAHNSETVHNVVDYVASAEYKVFAWGLNDPTEGNPTSIRDPWTDASPYTWNSDGMSKYPTTRGNNAIAQDNPTGGSTYINNYRPQSPNLIFSYPWSPTATPPSSYKDFSITQLFYTTNRYHDLLYSFGFNEAAGNFQVNNGNKGGKGNDFAIVNAQDGSGTNNANFATPPDGSPGRMRMYNWTTARPNRDGCLEAGIVIHEYTHGLSNRLCGGPANSACLNALESGGMGEGWGDFYATAIRLKPRDTKNTNYSMGAWAANNPKGIRAYLYSTNLQTNPYMYTSVNSLREVHQIGTVWASMLYDLMWALIEAHGGTYSANPVFRNGVPQDGRHLSMKLVMDGMALQPCNPNFVQARDAILDADRALTNSANKCTIWKAFAKRGLGYGAKYDARNRTGSNKLPPGC.

Residues 1 to 18 (MHGLLLAGLLALPMNVLA) form the signal peptide. A propeptide spanning residues 19–246 (YPAEQHASNV…VHNVVDYVAS (228 aa)) is cleaved from the precursor. N-linked (GlcNAc...) asparagine glycosylation is present at Asn410. His429 contacts Zn(2+). Residue Glu430 is part of the active site. Residue His433 coordinates Zn(2+). 2 N-linked (GlcNAc...) asparagine glycosylation sites follow: Asn480 and Asn622.

It belongs to the peptidase M36 family. The cofactor is Zn(2+).

It is found in the secreted. Its function is as follows. Secreted metalloproteinase probably acting as a virulence factor. The polypeptide is Extracellular metalloproteinase 3 (MEP3) (Trichophyton rubrum (Athlete's foot fungus)).